The following is a 291-amino-acid chain: NAD kinase (291 aa).

Catalysis depends on Asp73, which acts as the Proton acceptor. NAD(+)-binding positions include 73 to 74 (DG), 147 to 148 (ND), Arg175, Asp177, and Gln246.

This sequence belongs to the NAD kinase family. A divalent metal cation serves as cofactor.

It localises to the cytoplasm. It carries out the reaction NAD(+) + ATP = ADP + NADP(+) + H(+). Involved in the regulation of the intracellular balance of NAD and NADP, and is a key enzyme in the biosynthesis of NADP. Catalyzes specifically the phosphorylation on 2'-hydroxyl of the adenosine moiety of NAD to yield NADP. This Chromobacterium violaceum (strain ATCC 12472 / DSM 30191 / JCM 1249 / CCUG 213 / NBRC 12614 / NCIMB 9131 / NCTC 9757 / MK) protein is NAD kinase.